The primary structure comprises 392 residues: MHEVATTVSSAEMSSPPVAESWCYTQVKVVKFSYMWTINNFSFCREETGEVLKSSSFSSGPNDKLKWCLRVNPKGLDDESKDYLSLYLLLVSCPKNEVRAKFKFSLLNSKNEETKAMESQRAYRFVQGKDWGFKKYIRRDFLLDEANGLLPDDKLTLYCEVSVVQDSINISGQSSSNNLKVPECRLAEDMGYLWENRRFTDCSLFVEGKEFKAHKSILAARSPVFSAMFEHPMQESRKNRVYIRDVDPEVFKEMMRFIYTGGTPHVDKMADKLLAAADKYALERLKVMCEESLCNNLTVENVADVLILADLHSAEQLKAQAIDFINRCSVLGQLGCKDRKNCNSNQTMDIMETAGWKSMIKSHPHLVAEAFRALASAQCPPFGIPRKRLKQS.

In terms of domain architecture, MATH spans 31–161 (KFSYMWTINN…DDKLTLYCEV (131 aa)). Residues 200–267 (TDCSLFVEGK…IYTGGTPHVD (68 aa)) enclose the BTB domain.

This sequence belongs to the Tdpoz family. In terms of assembly, homodimer. Heterodimer with SPOP. Component of cullin-RING-based BCR (BTB-CUL3-RBX1) E3 ubiquitin-protein ligase complexes containing homodimeric SPOPL or the heterodimer formed by SPOP and SPOPL.

It is found in the nucleus. It functions in the pathway protein modification; protein ubiquitination. Component of a cullin-RING-based BCR (BTB-CUL3-RBX1) E3 ubiquitin-protein ligase complex that mediates the ubiquitination and subsequent proteasomal degradation of target proteins, but with relatively low efficiency. The chain is Speckle-type POZ protein-like (spopl) from Xenopus laevis (African clawed frog).